A 222-amino-acid chain; its full sequence is Collectrin (222 aa).

The first 14 residues, 1–14 (MLWALFFLVTTIHA), serve as a signal peptide directing secretion. Topologically, residues 15 to 141 (ELCRPDAENA…LAPPMDPSVP (127 aa)) are extracellular. The Collectrin-like domain occupies 21-222 (AENAFKVRLS…LTEDERLTPL (202 aa)). N-linked (GlcNAc...) asparagine glycans are attached at residues asparagine 76 and asparagine 93. A helical membrane pass occupies residues 142 to 162 (VWIIVFGVIFCIVTVAIALLV). Residues 163 to 222 (LSGIRQRRRNKKGPPGVEDAEDKCENIITIENGIPCDPLDMKGGHINDGFLTEDERLTPL) are Cytoplasmic-facing. Phosphothreonine occurs at positions 214 and 220.

Belongs to the CLTRN family. Monomer. Homodimer; dimerization prevents CLTRN cleavage by BACE2. Interacts with SLC6A18; this interaction regulates the trafficking of SLC6A18 to the cell membrane and its amino acid transporter activity. Interacts with SLC6A19; this interaction regulates the trafficking of SLC6A19 to the cell membrane and its amino acid transporter activity. Interacts with SNAPIN. In terms of processing, glycosylated. Glycosylation is required for plasma membrane localization and for its cleavage by BACE2. Post-translationally, proteolytically processed in pancreatic beta cells by BACE2 leading to the generation and extracellular release of soluble CLTRN, and a corresponding cell-associated C-terminal fragment which is later cleaved by gamma-secretase. This shedding process inactivates CLTRN. Three cleavage sites have been identified for BACE2, two clustered sites after Phe-116 and Leu-118 and a more membrane proximal site at Phe-125; the preferred BACE2 cleavage site seems to be between Phe-125 and Leu-126, Phe-116 and Leu-118 act as alternative sites. Kidney; collecting ducts. Pancreas; beta cells of islets.

Its subcellular location is the cell membrane. Functionally, plays an important role in amino acid transport by acting as binding partner of amino acid transporters SLC6A18 and SLC6A19, regulating their trafficking on the cell surface and their activity. May also play a role in trafficking of amino acid transporters SLC3A1 and SLC7A9 to the renal cortical cell membrane. Regulator of SNARE complex function. Stimulator of beta cell replication. The polypeptide is Collectrin (Rattus norvegicus (Rat)).